Here is an 846-residue protein sequence, read N- to C-terminus: Disrupted in schizophrenia 1 homolog (846 aa).

5 disordered regions span residues 1-53 (MQGA…IGFL), 127-147 (HSGV…GDSG), 231-257 (EAEP…GEPR), 277-312 (TRSN…QDGG), and 409-436 (LHGA…AQDS). The interval 1–288 (MQGAGSRGAW…SNRQPECGMV (288 aa)) is interaction with MAP1A. 2 stretches are compositionally biased toward basic and acidic residues: residues 133 to 143 (GNDRRQSERLT) and 248 to 257 (GSDRPHGEPR). Over residues 277–300 (TRSNRQPECGMVSSSDAGFSSQDA) the composition is skewed to polar residues. Residues 289-686 (SSSDAGFSSQ…LERVWKADLE (398 aa)) are interaction with TRAF3IP1. Residues 429–587 (RRTTAQDSLP…LLEAKMLALS (159 aa)) form a required for localization to punctate cytoplasmic foci region. A necessary and sufficient for interaction with PCNT and localization at the centrosome region spans residues 435–846 (DSLPGLAVTR…STAGAQEAED (412 aa)). The stretch at 440–489 (LAVTRRDWLMREKEQLQKEIEALRARVSVLEAKEQRLSQELEDQEMLLRW) forms a coiled coil. Residues 588–846 (GSCFSTAKEL…STAGAQEAED (259 aa)) are interaction with ATF4 and ATF5. The interval 721 to 846 (TAALAVPRTP…STAGAQEAED (126 aa)) is interaction with NDEL1 and PAFAH1B1. The interaction with PAFAH1B1 stretch occupies residues 721–846 (TAALAVPRTP…STAGAQEAED (126 aa)). An interaction with NDEL1 region spans residues 795–828 (GHDEALFQSLQGELQMVKETLQTMFLQLQPAKEA).

In terms of assembly, interacts with NDEL1. Interacts with CCDC88A (via C-terminus); the interaction is direct. Interacts with GSK3B. Interacts with tubulin alpha, ACTN2, ANKHD1, ATF4, ATF5, CEP63, EIF3S3, MAP1A, NDEL1, PAFAH1B1, RANBP9, SPTBN4, SYNE1 and TRAF3IP1. Interaction with microtubules may be mediated in part by TRAF3IP1. Interacts (via C-terminal) with PCNT. Interacts with CHCHD6. Interacts with CCDC141. Interacts with FBXW7, the substrate-recognition component of a SCF (SKP1-CUL1-F-box protein) E3 ubiquitin-protein ligase complex; the interaction targets DISC1 for proteasomal degradation. Interacts with ZNF365. Interacts with ATF4; inhibiting ATF4 transcription factor activity by disrupting ATF4 dimerization and DNA-binding. Interacts with PDE4B. Ubiquitinated. Ubiquitination with 'Lys-48'-linked polyubiquitin chains leads to its proteasomal degradation. In terms of tissue distribution, expressed in brain, heart, kidney, liver and thymus. Within the brain expression is high in the cerebral cortex, hippocampus and olfactory bulb and is also seen at lower levels in the cerebellum (at protein level).

The protein localises to the cytoplasm. It localises to the cytoskeleton. Its subcellular location is the mitochondrion. It is found in the microtubule organizing center. The protein resides in the centrosome. The protein localises to the postsynaptic density. In terms of biological role, involved in the regulation of multiple aspects of embryonic and adult neurogenesis. Required for neural progenitor proliferation in the ventrical/subventrical zone during embryonic brain development and in the adult dentate gyrus of the hippocampus. Participates in the Wnt-mediated neural progenitor proliferation as a positive regulator by modulating GSK3B activity and CTNNB1 abundance. Plays a role as a modulator of the AKT-mTOR signaling pathway controlling the tempo of the process of newborn neurons integration during adult neurogenesis, including neuron positioning, dendritic development and synapse formation. Inhibits the activation of AKT-mTOR signaling upon interaction with CCDC88A. Regulates the migration of early-born granule cell precursors toward the dentate gyrus during the hippocampal development. Inhibits ATF4 transcription factor activity in neurons by disrupting ATF4 dimerization and DNA-binding. Plays a role, together with PCNT, in the microtubule network formation. The protein is Disrupted in schizophrenia 1 homolog of Rattus norvegicus (Rat).